The sequence spans 123 residues: RxLR effector protein Avh262 (123 aa).

An N-terminal signal peptide occupies residues 1 to 18 (MLPVAVVLVVFAVAVTSA). The disordered stretch occupies residues 24 to 46 (VNPLPRRRRLKGTEEKGHHTNVN). The short motif at 30–50 (RRRLKGTEEKGHHTNVNDEER) is the RxLR-dEER element. Over residues 34-46 (KGTEEKGHHTNVN) the composition is skewed to basic and acidic residues. The interval 60 to 82 (LISKLKVKINAKLLAGDSAKPAT) is biP-binding.

This sequence belongs to the RxLR effector family. Interacts with host plant ER-luminal binding immunoglobulin proteins (BiPs) such as soybean BiP1, BiP2, BiP3 and BiP4.

The protein resides in the secreted. The protein localises to the host endoplasmic reticulum. Its function is as follows. Effector that suppresses plant defense responses during the early stages of pathogen infection. Suppresses cell death induced by effectors and PAMPs in plant hosts. Avh262 stabilizes endoplasmic reticulum (ER)-luminal binding immunoglobulin proteins (BiPs), which act as negative regulators of plant resistance to Phytophthora. By stabilizing BiPs, Avh262 suppresses ER stress-triggered cell death and facilitates Phytophthora infection. This chain is RxLR effector protein Avh262, found in Phytophthora sojae (Soybean stem and root rot agent).